The following is a 161-amino-acid chain: MAYNPITPSKLIAFSASYVPVRTLLNFLVASQGTAFQTQAGRDSFRESLSALPSSVVDINSRFPDAGFYAFLNGPVLRPIFVSLLSSTDTRNRVIEVVDPSNPTTAESLNAVKRTDDASTAARAEIDNLIESISKGFDVYDRASFEAAFSVVWSEATTSKA.

Ala2 is modified (N-acetylalanine; by host).

This sequence belongs to the virgaviridae capsid protein family.

It localises to the virion. Capsid protein self-assembles to form rod-shaped virions about 18 nm in diameter with a central canal enclosing the viral genomic RNA. In Cucumber green mottle mosaic virus (strain watermelon SH) (CGMMV), this protein is Capsid protein (CP).